The following is a 503-amino-acid chain: Lysine--tRNA ligase (503 aa).

Residues E414 and E421 each coordinate Mg(2+).

Belongs to the class-II aminoacyl-tRNA synthetase family. In terms of assembly, homodimer. The cofactor is Mg(2+).

The protein resides in the cytoplasm. It catalyses the reaction tRNA(Lys) + L-lysine + ATP = L-lysyl-tRNA(Lys) + AMP + diphosphate. This chain is Lysine--tRNA ligase, found in Neisseria meningitidis serogroup B (strain ATCC BAA-335 / MC58).